The chain runs to 129 residues: Large ribosomal subunit protein bL12 (129 aa).

This sequence belongs to the bacterial ribosomal protein bL12 family. Homodimer. Part of the ribosomal stalk of the 50S ribosomal subunit. Forms a multimeric L10(L12)X complex, where L10 forms an elongated spine to which 2 to 4 L12 dimers bind in a sequential fashion. Binds GTP-bound translation factors.

In terms of biological role, forms part of the ribosomal stalk which helps the ribosome interact with GTP-bound translation factors. Is thus essential for accurate translation. This chain is Large ribosomal subunit protein bL12, found in Photobacterium profundum (strain SS9).